We begin with the raw amino-acid sequence, 729 residues long: Phosphoribosylformylglycinamidine synthase subunit PurL (729 aa).

The active site involves histidine 54. ATP-binding residues include tyrosine 57 and lysine 96. Position 98 (glutamate 98) interacts with Mg(2+). Residues serine 99 to histidine 102 and arginine 121 contribute to the substrate site. Histidine 100 acts as the Proton acceptor in catalysis. Aspartate 122 provides a ligand contact to Mg(2+). Glutamine 245 serves as a coordination point for substrate. Residue aspartate 273 coordinates Mg(2+). Residue glutamate 317–glutamine 319 participates in substrate binding. The ATP site is built by aspartate 495 and glycine 532. Asparagine 533 provides a ligand contact to Mg(2+). Serine 535 contacts substrate.

Belongs to the FGAMS family. Monomer. Part of the FGAM synthase complex composed of 1 PurL, 1 PurQ and 2 PurS subunits.

The protein localises to the cytoplasm. It catalyses the reaction N(2)-formyl-N(1)-(5-phospho-beta-D-ribosyl)glycinamide + L-glutamine + ATP + H2O = 2-formamido-N(1)-(5-O-phospho-beta-D-ribosyl)acetamidine + L-glutamate + ADP + phosphate + H(+). The protein operates within purine metabolism; IMP biosynthesis via de novo pathway; 5-amino-1-(5-phospho-D-ribosyl)imidazole from N(2)-formyl-N(1)-(5-phospho-D-ribosyl)glycinamide: step 1/2. In terms of biological role, part of the phosphoribosylformylglycinamidine synthase complex involved in the purines biosynthetic pathway. Catalyzes the ATP-dependent conversion of formylglycinamide ribonucleotide (FGAR) and glutamine to yield formylglycinamidine ribonucleotide (FGAM) and glutamate. The FGAM synthase complex is composed of three subunits. PurQ produces an ammonia molecule by converting glutamine to glutamate. PurL transfers the ammonia molecule to FGAR to form FGAM in an ATP-dependent manner. PurS interacts with PurQ and PurL and is thought to assist in the transfer of the ammonia molecule from PurQ to PurL. This Staphylococcus aureus (strain Mu3 / ATCC 700698) protein is Phosphoribosylformylglycinamidine synthase subunit PurL.